The following is a 748-amino-acid chain: ATP-dependent rRNA helicase SPB4 (748 aa).

Residues 15–43 (WAKLNPPLSPWILDVINSMGFKNMTPVQA) carry the Q motif motif. One can recognise a Helicase ATP-binding domain in the interval 46 to 260 (IPRAVKNQDC…GLGLRNPVRI (215 aa)). 59–66 (AVTGSGKT) provides a ligand contact to ATP. The disordered stretch occupies residues 119-156 (ESEEETGDVEAHAPPFASSSRSPSPQTPDKPLFPLPML). A compositionally biased stretch (low complexity) spans 132 to 142 (PPFASSSRSPS). The segment covering 143–152 (PQTPDKPLFP) has biased composition (pro residues). Residues 207–210 (DEAD) carry the DEAD box motif. The Helicase C-terminal domain maps to 295-460 (KTLQLIRLLL…KAQRSILDFL (166 aa)). A disordered region spans residues 614–748 (AQRADNQSSN…IGGGMFDDLE (135 aa)). 2 stretches are compositionally biased toward basic and acidic residues: residues 626-669 (ARAE…KYEW) and 708-730 (EIGKEYKSLKREIKEEKSVKESS). Residues 732–748 (GGAGGGGIGGGMFDDLE) are compositionally biased toward gly residues.

The protein belongs to the DEAD box helicase family. DDX55/SPB4 subfamily. In terms of assembly, component of pre-60S ribosomal complexes.

It is found in the nucleus. The protein resides in the nucleolus. It catalyses the reaction ATP + H2O = ADP + phosphate + H(+). Functionally, ATP-binding RNA helicase involved in the biogenesis of 60S ribosomal subunits. Binds 90S pre-ribosomal particles and dissociates from pre-60S ribosomal particles after processing of 27SB pre-rRNA. Required for the normal formation of 18S rRNA through the processing of pre-rRNAs at sites A0, A1 and A2, and the normal formation of 25S and 5.8S rRNAs through the processing of pre-rRNAs at sites C1 and C2. This is ATP-dependent rRNA helicase SPB4 from Cryptococcus neoformans var. neoformans serotype D (strain B-3501A) (Filobasidiella neoformans).